The primary structure comprises 129 residues: Large ribosomal subunit protein bL12 (129 aa).

The protein belongs to the bacterial ribosomal protein bL12 family. Homodimer. Part of the ribosomal stalk of the 50S ribosomal subunit. Forms a multimeric L10(L12)X complex, where L10 forms an elongated spine to which 2 to 4 L12 dimers bind in a sequential fashion. Binds GTP-bound translation factors.

Its function is as follows. Forms part of the ribosomal stalk which helps the ribosome interact with GTP-bound translation factors. Is thus essential for accurate translation. The sequence is that of Large ribosomal subunit protein bL12 from Protochlamydia amoebophila (strain UWE25).